Consider the following 178-residue polypeptide: Large ribosomal subunit protein uL10 (178 aa).

It belongs to the universal ribosomal protein uL10 family. In terms of assembly, part of the ribosomal stalk of the 50S ribosomal subunit. The N-terminus interacts with L11 and the large rRNA to form the base of the stalk. The C-terminus forms an elongated spine to which L12 dimers bind in a sequential fashion forming a multimeric L10(L12)X complex.

Its function is as follows. Forms part of the ribosomal stalk, playing a central role in the interaction of the ribosome with GTP-bound translation factors. This Albidiferax ferrireducens (strain ATCC BAA-621 / DSM 15236 / T118) (Rhodoferax ferrireducens) protein is Large ribosomal subunit protein uL10.